Consider the following 295-residue polypeptide: MSPGGAGCSAGLLLTVGWLLLAGLQSTCGINVTAVQDPSLVSEGENEGEEEAENDSEVENEPQAEAEQDVSNKTVVKEVEFGMCTVTCGVGIREVLLTNGCPGGESKCIVRVEECRGPVDCGWGKPISENLESVRLSCVHTSPVNRFKYVWRLLRPNQQAVILANDSAILEVQRETHPMAFQCETLDNNEIVATVKFTVYTTAELQMKRSSRPDTDAVLVFVLTIGVIICIFVIFVLIFIIVNWATVKDFWASKASTTEIQSELSSMKYKDSTSLDQSPTEIPGHEDDALSEWNE.

Residues methionine 1 to glycine 29 form the signal peptide. The Extracellular segment spans residues isoleucine 30–valine 220. Positions serine 39 to serine 71 are disordered. Acidic residues predominate over residues glycine 44–glutamine 68. N-linked (GlcNAc...) asparagine glycosylation is present at asparagine 72. The chain crosses the membrane as a helical span at residues phenylalanine 221–isoleucine 241. The Cytoplasmic segment spans residues valine 242–glutamate 295. Serine 256 carries the post-translational modification Phosphoserine. The interval glutamate 263 to glutamate 295 is disordered. Phosphotyrosine is present on tyrosine 269. Phosphoserine is present on residues serine 278 and serine 291.

As to quaternary structure, interacts with CYLC1; the interaction may be relevant for proper acrosome attachment to the nuclear envelope. In terms of processing, N-glycosylated. Detected in spermatozoa (at protein level).

Its subcellular location is the cytoplasmic vesicle. The protein localises to the secretory vesicle. It localises to the acrosome inner membrane. Plays a role in acrosome expansion and establishment of normal sperm morphology during spermatogenesis. Important for male fertility. The sequence is that of Sperm acrosome membrane-associated protein 1 from Sus scrofa (Pig).